The following is a 424-amino-acid chain: Protein ORF114 (424 aa).

It localises to the host cytoplasm. Functionally, plays a role in per os infectivity in vivo. Facilitates embedding of occlusion-derived viruses (ODVs) into occlusion bodies (OBs). This Lepidoptera (butterflies and moths) protein is Protein ORF114.